Reading from the N-terminus, the 56-residue chain is Botcinic acid biosynthesis cluster B protein 14 (56 aa).

It participates in polyketide biosynthesis. Part of the gene cluster B that mediates the biosynthesis of botcinic acid and its botcinin derivatives, acetate-derived polyketides that contribute to virulence when combined with the sesquiterpene botrydial. Botcinic acid and its derivatives have been shown to induce chlorosis and necrosis during host plant infection, but also have antifungal activities. Two polyketide synthases, BOA6 and BOA9, are involved in the biosynthesis of botcinins. BOA6 mediates the formation of the per-methylated tetraketide core by condensation of four units of malonyl-CoA with one unit of acetyl-CoA, which would be methylated in activated methylene groups to yield a bicyclic acid intermediate that could then either be converted to botrylactone derivatives or lose the starter acetate unit through a retro-Claisen type C-C bond cleavage to yield botcinin derivatives. The second polyketide synthase, BOA9, is probably required for the biosynthesis of the tetraketide side chain of botcinins. The methyltransferase (MT) domain within BOA6 is probably responsible for the incorporation of four methyl groups. The trans-enoyl reductase BOA5 might take over the enoyl reductase function of BOA6 that misses an ER domain. The monooxygenases BOA2, BOA3 and BOA4 might be involved in further hydroxylations at C4, C5 and C8, whereas BOA7, close to BOA9, could potentially be involved in the hydroxylation at C4 in the side chain of botcinins. This chain is Botcinic acid biosynthesis cluster B protein 14, found in Botryotinia fuckeliana (strain B05.10) (Noble rot fungus).